A 201-amino-acid chain; its full sequence is Esterase TesA (201 aa).

Positions 1-21 are cleaved as a signal peptide; that stretch reads MRALLLSGCLALVLLTQQAAA. The active-site Nucleophile is Ser-30. Active-site residues include Asp-177 and His-180.

The protein belongs to the 'GDSL' lipolytic enzyme family.

It localises to the secreted. It catalyses the reaction a carboxylic ester + H2O = an alcohol + a carboxylate + H(+). In terms of biological role, esterase that exhibits the highest activity towards Tween detergents and p-nitrophenyl esters of short acyl chain length. Also displays a low thioesterase activity towards palmitoyl-coenzyme A, but is not active towards acetyl-coenzyme A. The sequence is that of Esterase TesA (tesA) from Pseudomonas aeruginosa (strain ATCC 15692 / DSM 22644 / CIP 104116 / JCM 14847 / LMG 12228 / 1C / PRS 101 / PAO1).